We begin with the raw amino-acid sequence, 560 residues long: Interferon alpha/beta receptor 1 (560 aa).

Positions 1–24 (MLGLLGATTLMLVAGAPWVLPAGG) are cleaved as a signal peptide. Over 25-437 (ADLRSPENVV…EKTKPGSTSQ (413 aa)) the chain is Extracellular. 4 consecutive Fibronectin type-III domains span residues 29 to 125 (SPEN…FQEA), 133 to 224 (HLEA…INTT), 231 to 329 (SPEN…TEMQ), and 333 to 433 (FPPV…TKPG). An N-linked (GlcNAc...) asparagine glycan is attached at asparagine 55. Residues cysteine 76 and cysteine 84 are joined by a disulfide bond. N-linked (GlcNAc...) asparagine glycosylation is found at asparagine 85, asparagine 108, and asparagine 172. A disulfide bridge connects residues cysteine 199 and cysteine 220. N-linked (GlcNAc...) asparagine glycans are attached at residues asparagine 222, asparagine 249, and asparagine 254. A disulfide bridge links cysteine 283 with cysteine 291. 3 N-linked (GlcNAc...) asparagine glycosylation sites follow: asparagine 313, asparagine 377, and asparagine 417. Cysteine 404 and cysteine 427 are disulfide-bonded. Residues 438-458 (AWLIAGILSAILLFPAVFYGV) traverse the membrane as a helical segment. The Cytoplasmic segment spans residues 459–560 (KVVSRCINYV…GEEILRQAAV (102 aa)). The S-palmitoyl cysteine moiety is linked to residue cysteine 464. A phosphotyrosine; by TYK2 mark is found at tyrosine 467 and tyrosine 482. The interval 492-501 (LLSTSEEQTE) is important for interaction with TYK2. A phosphoserine mark is found at serine 496 and serine 536. A disordered region spans residues 520–560 (QIDDNHSRCSSQTNRDSGVYSNEDENSGSKIGEEILRQAAV). The span at 527-539 (RCSSQTNRDSGVY) shows a compositional bias: polar residues. Over residues 550 to 560 (IGEEILRQAAV) the composition is skewed to basic and acidic residues.

This sequence belongs to the type II cytokine receptor family. As to quaternary structure, heterodimer with IFNAR2; forming the receptor for type I interferon. Interacts with TYK2. Interacts with STAT1 and STAT2; the interaction requires its phosphorylation at Tyr-482. Interacts (serine-phosphorylated form) with FBXW11, the substrate recognition component of a SCF (SKP1-CUL1-F-box protein) E3 ubiquitin-protein ligase complex. Interacts with SHMT2; this promotes interaction with ABRAXAS2 and the BRISC complex. Interacts with TRIM10; this interaction prevents association between IFNAR1 and TYK2. Ubiquitinated, leading to its internalization and degradation. Polyubiquitinated via 'Lys-48'-linked and 'Lys-63'-linked ubiquitin chains, leading to receptor internalization and lysosomal degradation. The 'Lys-63'-linked ubiquitin chains are cleaved off by the BRISC complex. In terms of processing, phosphorylated on tyrosine residues in response to interferon-binding: phosphorylation by TYK2 tyrosine kinase creates docking sites for STAT proteins. Phosphorylated on serine residues in response to interferon binding; this promotes interaction with FBXW11 and ubiquitination. Post-translationally, palmitoylation at Cys-464 is required for the activation of STAT1 and STAT2.

Its subcellular location is the cell membrane. The protein resides in the late endosome. It localises to the lysosome. Functionally, together with IFNAR2, forms the heterodimeric receptor for type I interferons (including interferons alpha, beta, epsilon, omega and kappa). Type I interferon binding activates the JAK-STAT signaling cascade, resulting in transcriptional activation or repression of interferon-regulated genes that encode the effectors of the interferon response. Mechanistically, type I interferon-binding brings the IFNAR1 and IFNAR2 subunits into close proximity with one another, driving their associated Janus kinases (JAKs) (TYK2 bound to IFNAR1 and JAK1 bound to IFNAR2) to cross-phosphorylate one another. The activated kinases phosphorylate specific tyrosine residues on the intracellular domains of IFNAR1 and IFNAR2, forming docking sites for the STAT transcription factors. STAT proteins are then phosphorylated by the JAKs, promoting their translocation into the nucleus to regulate expression of interferon-regulated genes. Can also act independently of IFNAR2: form an active IFNB1 receptor by itself and activate a signaling cascade that does not involve activation of the JAK-STAT pathway. This Sus scrofa (Pig) protein is Interferon alpha/beta receptor 1 (IFNAR1).